Reading from the N-terminus, the 433-residue chain is 3-phosphoshikimate 1-carboxyvinyltransferase (433 aa).

Lys-15, Ser-16, and Arg-20 together coordinate 3-phosphoshikimate. Lys-15 serves as a coordination point for phosphoenolpyruvate. Residues Gly-96 and Arg-124 each contribute to the phosphoenolpyruvate site. 5 residues coordinate 3-phosphoshikimate: Ser-169, Gln-171, Ser-195, Asp-318, and Lys-345. Position 171 (Gln-171) interacts with phosphoenolpyruvate. Asp-318 (proton acceptor) is an active-site residue. Phosphoenolpyruvate-binding residues include Arg-349 and Arg-393.

It belongs to the EPSP synthase family. In terms of assembly, monomer.

Its subcellular location is the cytoplasm. It carries out the reaction 3-phosphoshikimate + phosphoenolpyruvate = 5-O-(1-carboxyvinyl)-3-phosphoshikimate + phosphate. It participates in metabolic intermediate biosynthesis; chorismate biosynthesis; chorismate from D-erythrose 4-phosphate and phosphoenolpyruvate: step 6/7. Functionally, catalyzes the transfer of the enolpyruvyl moiety of phosphoenolpyruvate (PEP) to the 5-hydroxyl of shikimate-3-phosphate (S3P) to produce enolpyruvyl shikimate-3-phosphate and inorganic phosphate. This is 3-phosphoshikimate 1-carboxyvinyltransferase from Pelodictyon phaeoclathratiforme (strain DSM 5477 / BU-1).